The following is a 207-amino-acid chain: Thiamine-phosphate synthase (207 aa).

4-amino-2-methyl-5-(diphosphooxymethyl)pyrimidine-binding positions include Gln-41–Lys-45 and Asn-73. Positions 74 and 93 each coordinate Mg(2+). Position 111 (Thr-111) interacts with 4-amino-2-methyl-5-(diphosphooxymethyl)pyrimidine. Thr-138 to Thr-140 is a binding site for 2-[(2R,5Z)-2-carboxy-4-methylthiazol-5(2H)-ylidene]ethyl phosphate. Residue Lys-141 coordinates 4-amino-2-methyl-5-(diphosphooxymethyl)pyrimidine. A 2-[(2R,5Z)-2-carboxy-4-methylthiazol-5(2H)-ylidene]ethyl phosphate-binding site is contributed by Gly-168.

It belongs to the thiamine-phosphate synthase family. Mg(2+) serves as cofactor.

It carries out the reaction 2-[(2R,5Z)-2-carboxy-4-methylthiazol-5(2H)-ylidene]ethyl phosphate + 4-amino-2-methyl-5-(diphosphooxymethyl)pyrimidine + 2 H(+) = thiamine phosphate + CO2 + diphosphate. The catalysed reaction is 2-(2-carboxy-4-methylthiazol-5-yl)ethyl phosphate + 4-amino-2-methyl-5-(diphosphooxymethyl)pyrimidine + 2 H(+) = thiamine phosphate + CO2 + diphosphate. It catalyses the reaction 4-methyl-5-(2-phosphooxyethyl)-thiazole + 4-amino-2-methyl-5-(diphosphooxymethyl)pyrimidine + H(+) = thiamine phosphate + diphosphate. Its pathway is cofactor biosynthesis; thiamine diphosphate biosynthesis; thiamine phosphate from 4-amino-2-methyl-5-diphosphomethylpyrimidine and 4-methyl-5-(2-phosphoethyl)-thiazole: step 1/1. Condenses 4-methyl-5-(beta-hydroxyethyl)thiazole monophosphate (THZ-P) and 2-methyl-4-amino-5-hydroxymethyl pyrimidine pyrophosphate (HMP-PP) to form thiamine monophosphate (TMP). This is Thiamine-phosphate synthase from Pelagibacter ubique (strain HTCC1062).